The sequence spans 506 residues: Glycerol kinase (506 aa).

Position 11 (Thr-11) interacts with ADP. Thr-11, Ser-12, and Ser-13 together coordinate ATP. A sn-glycerol 3-phosphate-binding site is contributed by Thr-11. Residue Arg-15 participates in ADP binding. Residues Arg-81, Glu-82, Tyr-133, and Asp-242 each contribute to the sn-glycerol 3-phosphate site. Glycerol contacts are provided by Arg-81, Glu-82, Tyr-133, Asp-242, and Gln-243. ADP contacts are provided by Thr-264 and Gly-316. Residues Thr-264, Gly-316, Gln-320, and Gly-421 each contribute to the ATP site. The ADP site is built by Gly-421 and Asn-425.

The protein belongs to the FGGY kinase family.

It catalyses the reaction glycerol + ATP = sn-glycerol 3-phosphate + ADP + H(+). Its pathway is polyol metabolism; glycerol degradation via glycerol kinase pathway; sn-glycerol 3-phosphate from glycerol: step 1/1. With respect to regulation, inhibited by fructose 1,6-bisphosphate (FBP). Key enzyme in the regulation of glycerol uptake and metabolism. Catalyzes the phosphorylation of glycerol to yield sn-glycerol 3-phosphate. This chain is Glycerol kinase, found in Paracidovorax citrulli (strain AAC00-1) (Acidovorax citrulli).